The chain runs to 335 residues: Glucokinase (335 aa).

11 to 16 (ADIGGT) is an ATP binding site.

Belongs to the bacterial glucokinase family.

It localises to the cytoplasm. The enzyme catalyses D-glucose + ATP = D-glucose 6-phosphate + ADP + H(+). The protein is Glucokinase of Xanthomonas campestris pv. campestris (strain 8004).